The sequence spans 488 residues: Cytochrome P450 71A24 (488 aa).

A helical transmembrane segment spans residues 3-23 (MMMMIILLLCSIILITILFFK). C433 contacts heme.

The protein belongs to the cytochrome P450 family. The cofactor is heme.

It localises to the membrane. The protein is Cytochrome P450 71A24 (CYP71A24) of Arabidopsis thaliana (Mouse-ear cress).